The chain runs to 470 residues: Mucin-like protein 3 (470 aa).

The signal sequence occupies residues 1 to 29; sequence MAQMTSGLYPMFGFFICLLFLPASWEAGA. Over 30-401 the chain is Extracellular; that stretch reads NTFQELQKTG…EGSNSFPAWA (372 aa). 2 disordered regions span residues 57 to 234 and 248 to 318; these read RALS…HTIP and TKEA…KAPE. Polar residues predominate over residues 75–87; sequence STATQKPKRQCNT. Asn-122 carries an N-linked (GlcNAc...) asparagine glycan. Over residues 132-152 the composition is skewed to basic and acidic residues; sequence ARNERSADDHGSTNSEKRSDG. Residues 169-193 show a composition bias toward polar residues; it reads TRTSGTPVSSTETSTKLRTTSQKPE. Residues 194–203 show a composition bias toward basic and acidic residues; it reads TSSHDSDLIR. The span at 204 to 222 shows a compositional bias: polar residues; that stretch reads KSTSLPVKSTEVSRTSYRT. Over residues 260–273 the composition is skewed to basic and acidic residues; the sequence is KYERETRSASERIS. Over residues 283 to 295 the composition is skewed to polar residues; it reads HTPSAGETTTQVS. N-linked (GlcNAc...) asparagine glycosylation occurs at Asn-325. The chain crosses the membrane as a helical span at residues 402–422; that stretch reads IVVVILMAVIILLIFLGLIFL. The Cytoplasmic portion of the chain corresponds to 423 to 470; sequence VSCASRARHQLTQNSEDAEPEDKGGRNSYPVYLMEQQNLNLNQISSPP.

The protein localises to the cell membrane. The protein resides in the cytoplasm. Its function is as follows. May modulate NF-kappaB signaling and play a role in cell growth. This Rattus norvegicus (Rat) protein is Mucin-like protein 3.